The following is a 107-amino-acid chain: Small ribosomal subunit protein uS17 (107 aa).

The protein belongs to the universal ribosomal protein uS17 family. In terms of assembly, part of the 30S ribosomal subunit.

Functionally, one of the primary rRNA binding proteins, it binds specifically to the 5'-end of 16S ribosomal RNA. This chain is Small ribosomal subunit protein uS17, found in Thermotoga maritima (strain ATCC 43589 / DSM 3109 / JCM 10099 / NBRC 100826 / MSB8).